The primary structure comprises 412 residues: Subtilisin-like protease 6 (412 aa).

A signal peptide spans 1 to 20 (MGFITKAIPIVLAALSTVNG). A propeptide spanning residues 21-127 (ARILEAGPHA…VRATTNGTNL (107 aa)) is cleaved from the precursor. Positions 36 to 120 (KYIVVMKKDV…FIEPDFVVRA (85 aa)) constitute an Inhibitor I9 domain. Residues asparagine 123 and asparagine 126 are each glycosylated (N-linked (GlcNAc...) asparagine). The Peptidase S8 domain occupies 135–412 (SWGLARVSTR…SKLIYNGSGK (278 aa)). Active-site charge relay system residues include aspartate 167 and histidine 198. 3 N-linked (GlcNAc...) asparagine glycosylation sites follow: asparagine 252, asparagine 264, and asparagine 325. The active-site Charge relay system is the serine 358. A glycan (N-linked (GlcNAc...) asparagine) is linked at asparagine 408.

It belongs to the peptidase S8 family.

The protein resides in the secreted. Functionally, secreted subtilisin-like serine protease with keratinolytic activity that contributes to pathogenicity. This is Subtilisin-like protease 6 (SUB6) from Trichophyton verrucosum (Cattle ringworm fungus).